The following is a 95-amino-acid chain: Citrate lyase acyl carrier protein (95 aa).

An O-(phosphoribosyl dephospho-coenzyme A)serine modification is found at S14.

It belongs to the CitD family. In terms of assembly, oligomer with a subunit composition of (alpha,beta,gamma)6.

It is found in the cytoplasm. In terms of biological role, covalent carrier of the coenzyme of citrate lyase. The protein is Citrate lyase acyl carrier protein of Haemophilus influenzae (strain PittEE).